A 191-amino-acid polypeptide reads, in one-letter code: Elongation factor P-like protein (191 aa).

It belongs to the elongation factor P family.

The chain is Elongation factor P-like protein from Shewanella sediminis (strain HAW-EB3).